A 160-amino-acid chain; its full sequence is Serine-protein kinase RsbW (160 aa).

This sequence belongs to the anti-sigma-factor family.

The enzyme catalyses L-seryl-[protein] + ATP = O-phospho-L-seryl-[protein] + ADP + H(+). It carries out the reaction L-threonyl-[protein] + ATP = O-phospho-L-threonyl-[protein] + ADP + H(+). In terms of biological role, negative regulator of sigma-B activity. Phosphorylates and inactivates its specific antagonist protein, RsbV. Upon phosphorylation of RsbV, RsbW is released and binds to sigma-B, thereby blocking its ability to form an RNA polymerase holoenzyme (E-sigma-B). This is Serine-protein kinase RsbW from Bacillus cereus (strain ATCC 10987 / NRS 248).